The following is a 493-amino-acid chain: Ketol-acid reductoisomerase (NADP(+)) (493 aa).

The KARI N-terminal Rossmann domain occupies 15-208; that stretch reads AQLGKCRFMQ…GGDRAGVLES (194 aa). NADP(+) contacts are provided by residues 45 to 48, R68, R76, S78, and 108 to 110; these read CGAQ and DKQ. H132 is an active-site residue. Residue G158 participates in NADP(+) binding. 2 KARI C-terminal knotted domains span residues 209–344 and 345–486; these read SFVA…NAPA and FAGK…MKDM. Mg(2+) is bound by residues D217, E221, E389, and E393. S414 is a binding site for substrate.

This sequence belongs to the ketol-acid reductoisomerase family. Requires Mg(2+) as cofactor.

The catalysed reaction is (2R)-2,3-dihydroxy-3-methylbutanoate + NADP(+) = (2S)-2-acetolactate + NADPH + H(+). It catalyses the reaction (2R,3R)-2,3-dihydroxy-3-methylpentanoate + NADP(+) = (S)-2-ethyl-2-hydroxy-3-oxobutanoate + NADPH + H(+). The protein operates within amino-acid biosynthesis; L-isoleucine biosynthesis; L-isoleucine from 2-oxobutanoate: step 2/4. It participates in amino-acid biosynthesis; L-valine biosynthesis; L-valine from pyruvate: step 2/4. Involved in the biosynthesis of branched-chain amino acids (BCAA). Catalyzes an alkyl-migration followed by a ketol-acid reduction of (S)-2-acetolactate (S2AL) to yield (R)-2,3-dihydroxy-isovalerate. In the isomerase reaction, S2AL is rearranged via a Mg-dependent methyl migration to produce 3-hydroxy-3-methyl-2-ketobutyrate (HMKB). In the reductase reaction, this 2-ketoacid undergoes a metal-dependent reduction by NADPH to yield (R)-2,3-dihydroxy-isovalerate. The chain is Ketol-acid reductoisomerase (NADP(+)) from Aeromonas hydrophila subsp. hydrophila (strain ATCC 7966 / DSM 30187 / BCRC 13018 / CCUG 14551 / JCM 1027 / KCTC 2358 / NCIMB 9240 / NCTC 8049).